A 405-amino-acid chain; its full sequence is MRATDRMGARAVSELRLALLFVLVLGTPRLGVQGEDGLDFPEYDGVDRVINVNAKNYKNVFKKYEVLALLYHEPPEDDKASQRQFEMEELILELAAQVLEDKGVGFGLVDSEKDAAVAKKLGLTEEDSVYVFKGDEVIEYDGEFSADTLVEFLLDVLEDPVELIEGERELQAFENIEDEIKLIGYFKSKDSEHYKAYEDAAEEFHPYIPFFATFDSKVAKKLTLKLNEIDFYEAFMEEPMTIPDKPNSEEEIVSFVEEHRRSTLRKLKPESMYETWEDDLDGIHIVAFAEEADPDGYEFLETLKAVAQDNTENPDLSIIWIDPDDFPLLVPYWEKTFDIDLSAPQIGVVNVTDADSIWMEMDNEEDLPSADELEDWLEDVLEGEINTEDDDDDDDDDDDDDDDDD.

The signal sequence occupies residues 1–34 (MRATDRMGARAVSELRLALLFVLVLGTPRLGVQG). Y43 carries the post-translational modification Phosphotyrosine. Residue S81 is modified to Phosphoserine. T124 bears the Phosphothreonine mark. S216 is subject to Phosphoserine. N350 carries an N-linked (GlcNAc...) asparagine glycan. Residues 382-405 (EGEINTEDDDDDDDDDDDDDDDDD) are disordered.

Belongs to the calsequestrin family. In terms of assembly, monomer; increases in response to a depletion of intracellular calcium. Homodimer. Homotetramer and homopolymer. Can form linear homooligomers. Ca(2+) ions promote oligomerization. Interacts (via C-terminal end and preferentially with the monomeric form) with STIM1; this interaction increases in response to a depletion of intracellular calcium, decreases both STIM1 aggregation and clustering, interaction of STIM1 with ORAI1 and store-operated Ca(2+) entry (SOCE) activity. Interacts with ASPH and TRDN. Post-translationally, N-glycosylated. As to expression, detected in skeletal muscle (at protein level). Detected in skeletal muscle.

Its subcellular location is the endoplasmic reticulum. The protein resides in the sarcoplasmic reticulum. It localises to the sarcoplasmic reticulum lumen. It is found in the sarcoplasmic reticulum membrane. The protein localises to the mitochondrion matrix. Functionally, calsequestrin is a high-capacity, moderate affinity, calcium-binding protein and thus acts as an internal calcium store in muscle. Calcium ions are bound by clusters of acidic residues at the protein surface, often at the interface between subunits. Can bind around 80 Ca(2+) ions. Regulates the release of lumenal Ca(2+) via the calcium release channel RYR1; this plays an important role in triggering muscle contraction. Negatively regulates store-operated Ca(2+) entry (SOCE) activity. The polypeptide is Calsequestrin-1 (Casq1) (Mus musculus (Mouse)).